We begin with the raw amino-acid sequence, 301 residues long: Protoheme IX farnesyltransferase (301 aa).

9 consecutive transmembrane segments (helical) span residues 34–54, 55–75, 102–121, 125–144, 152–172, 181–201, 222–242, 247–267, and 280–300; these read LVVF…HPLI, GLVS…FNMW, AWEC…AIAV, SALL…TMLL, IVIG…SVSG, LFAI…LLTL, SHIL…GLFV, LYEI…IAVF, and GLFK…IACV.

This sequence belongs to the UbiA prenyltransferase family. Protoheme IX farnesyltransferase subfamily.

The protein localises to the cell inner membrane. The catalysed reaction is heme b + (2E,6E)-farnesyl diphosphate + H2O = Fe(II)-heme o + diphosphate. Its pathway is porphyrin-containing compound metabolism; heme O biosynthesis; heme O from protoheme: step 1/1. In terms of biological role, converts heme B (protoheme IX) to heme O by substitution of the vinyl group on carbon 2 of heme B porphyrin ring with a hydroxyethyl farnesyl side group. This chain is Protoheme IX farnesyltransferase, found in Anaplasma marginale (strain Florida).